We begin with the raw amino-acid sequence, 433 residues long: Leucine-rich repeat extensin-like protein 7 (433 aa).

Positions 1–21 (MRIYQPTLLIFTTVVLLSISA) are cleaved as a signal peptide. Residue asparagine 71 is glycosylated (N-linked (GlcNAc...) asparagine). 9 LRR repeats span residues 98–122 (VKTV…LGLL), 123–145 (TDIA…GFSQ), 146–170 (LSLL…VIGL), 171–194 (PKLK…LFDK), 196–217 (LDAL…MGNS), 219–239 (VSVL…SFGK), 241–265 (GKTL…MGLL), 266–289 (QNVT…MGQM), and 290–313 (ENLE…LCSL). Asparagine 267 carries an N-linked (GlcNAc...) asparagine glycan. The N-linked (GlcNAc...) asparagine glycan is linked to asparagine 340. The interval 380–433 (FSPPPSQISPSSQPLAPAPSPTSPPLSTPPPARPCPPVYSPPPPPPLSLAPSMN) is disordered. The tract at residues 381 to 433 (SPPPSQISPSSQPLAPAPSPTSPPLSTPPPARPCPPVYSPPPPPPLSLAPSMN) is contains the Ser-Pro(4) repeats. Positions 395-427 (APAPSPTSPPLSTPPPARPCPPVYSPPPPPPLS) are enriched in pro residues.

Post-translationally, hydroxylated on proline residues in the S-P-P-P-P repeat. In terms of processing, O-glycosylated on hydroxyprolines. Expressed in flowers and pollen.

The protein resides in the secreted. The protein localises to the cell wall. In terms of biological role, modulates cell morphogenesis by regulating cell wall formation and assembly, and/or growth polarization. This Arabidopsis thaliana (Mouse-ear cress) protein is Leucine-rich repeat extensin-like protein 7 (LRX7).